Here is a 658-residue protein sequence, read N- to C-terminus: Translation factor GUF1, mitochondrial (658 aa).

Residues 45–231 (ENYRNFSIVA…AVIDRIPPPT (187 aa)) form the tr-type G domain. GTP-binding positions include 54-61 (AHIDHGKS), 123-127 (DTPGH), and 177-180 (NKID).

The protein belongs to the TRAFAC class translation factor GTPase superfamily. Classic translation factor GTPase family. LepA subfamily.

It is found in the mitochondrion inner membrane. It carries out the reaction GTP + H2O = GDP + phosphate + H(+). Its function is as follows. Promotes mitochondrial protein synthesis. May act as a fidelity factor of the translation reaction, by catalyzing a one-codon backward translocation of tRNAs on improperly translocated ribosomes. Binds to mitochondrial ribosomes in a GTP-dependent manner. The polypeptide is Translation factor GUF1, mitochondrial (Vanderwaltozyma polyspora (strain ATCC 22028 / DSM 70294 / BCRC 21397 / CBS 2163 / NBRC 10782 / NRRL Y-8283 / UCD 57-17) (Kluyveromyces polysporus)).